We begin with the raw amino-acid sequence, 308 residues long: Isoflavone reductase homolog (308 aa).

NADP(+) is bound by residues 11 to 17, Arg36, and Lys45; that span reads GGTGYIG. Lys133 acts as the Proton acceptor in catalysis. Arg137 is an NADP(+) binding site.

The protein belongs to the NmrA-type oxidoreductase family. Isoflavone reductase subfamily.

The protein localises to the cytoplasm. The chain is Isoflavone reductase homolog from Solanum tuberosum (Potato).